The following is a 1140-amino-acid chain: Protein shank (1140 aa).

6 ANK repeats span residues 144–174, 178–207, 211–242, 246–275, 279–309, and 312–341; these read QGETPLTLAAGIPNNRAVIVSLIGGGAHVDF, EGQTAMHKAAFLSSFENVKTLIELGASPNY, IGLTPLYYNMLTADSNDQVAEILLREAADIGV, HGNHEIHQACKNGLTKHVEHLLYFGGQIDA, NGNSPLHVCAVNNRPECARVLLFRGADHLAV, and QGQTALHVSHIVGNPGVADVVQAHNPKSSV. Residues 337 to 412 form a disordered region; sequence PKSSVPYRGT…ITPSEYGTMR (76 aa). Residues 351–364 are compositionally biased toward basic residues; it reads TRRRLSSTITRRRS. Residues 388–412 show a composition bias toward low complexity; it reads SAAPSPSPSRSSRTTITPSEYGTMR. The 94-residue stretch at 436–529 folds into the PDZ domain; that stretch reads ILVIPRGVKG…TITLKVITVD (94 aa). Polar residues-rich tracts occupy residues 640 to 657 and 687 to 704; these read DQESLNGGYSSKKYNSVS and TSTFEYNCSSRSTPQLSR. 5 disordered regions span residues 640 to 673, 687 to 856, 875 to 902, 961 to 993, and 1008 to 1028; these read DQESLNGGYSSKKYNSVSDMKRRKGQRNVVASSA, TSTF…AASA, QLKKAEPRETSAASVSNNNNNNNNSTTD, KDSGYTSSRTSLEPSESEEKDHRPHFSLDHSPN, and YGQKDNMSVASSSTASSSSTV. Composition is skewed to low complexity over residues 761 to 775 and 784 to 793; these read QHQNHQNHQYQQQHP and PQPIQQQQSS. 2 stretches are compositionally biased toward pro residues: residues 794-806 and 823-847; these read IPPPPPPPPPPHC and VPPPPPPLPPISSGAPPPPPPPPPG. Over residues 964–974 the composition is skewed to polar residues; it reads GYTSSRTSLEP. The span at 977–988 shows a compositional bias: basic and acidic residues; sequence SEEKDHRPHFSL. Low complexity predominate over residues 1015–1028; sequence SVASSSTASSSSTV. The 63-residue stretch at 1078–1140 folds into the SAM domain; the sequence is WSVDDVIGWL…IESALRGLLQ (63 aa).

Belongs to the SHANK family. In terms of assembly, interacts (via PDZ domain) with egl-19 (via C-terminus). As to expression, expressed in the pharynx, pharyngeal-intestinal valve, intestine, rectal epithelial cells, tail neurons, nerve cord and sperm.

Its subcellular location is the cell projection. The protein localises to the pseudopodium. The protein resides in the cytoplasmic vesicle. It is found in the postsynaptic density. In terms of biological role, scaffold protein that most likely acts in the postsynaptic density (PSD) of excitatory synapses which orchestrates synapse formation and maintenance at neuromuscular junctions. Associates with and trafficks the L-type calcium channel egl-19 to the cell surface of body wall muscles to ensure the function of the calcium channel and therefore maintain the Ca(2+) current density. The maintenance of Ca(2+) also allows for the downstream regulation of Ca(2+)-induced expression of genes such as gem-4. Plays a role in the regulation of the defecation cycle, and this may be in association with the inositol trisphosphate (IP3) receptor itr-1, which in turn mediates periodic calcium release and muscle contractions. Required for normal fertility and pharyngeal pumping. This is Protein shank from Caenorhabditis elegans.